Here is a 463-residue protein sequence, read N- to C-terminus: Hexose-6-phosphate:phosphate antiporter (463 aa).

At 1 to 24 (MLAFLNQVRKPTLDLPLDVRRKMW) the chain is on the cytoplasmic side. A helical membrane pass occupies residues 25-45 (FKPFMQSYLVVFIGYLTMYLI). Residues 46 to 60 (RKNFNIAQNDMISTY) lie on the Periplasmic side of the membrane. A helical transmembrane segment spans residues 61–81 (GLSMTELGMIGLGFSITYGVG). Topologically, residues 82–96 (KTLVSYYADGKNTKQ) are cytoplasmic. The helical transmembrane segment at 97 to 117 (FLPFMLILSAICMLGFSASMG) threads the bilayer. At 118–122 (AGSTS) the chain is on the periplasmic side. Residues 123-143 (LFLMIAFYALSGFFQSTGGSC) traverse the membrane as a helical segment. At 144 to 159 (SYSTITKWTPRRKRGT) the chain is on the cytoplasmic side. Residues 160–180 (FLGFWNISHNLGGAGAAGVAL) form a helical membrane-spanning segment. Residues 181–189 (FGANYLFDG) lie on the Periplasmic side of the membrane. A helical transmembrane segment spans residues 190–210 (HVIGMFIFPSIIALIVGFIGL). At 211-259 (RFGSDSPESYGLGKAEELFGEEISEEDKETEENEMTKWQIFVEYVLKNK) the chain is on the cytoplasmic side. Residues 260–280 (VIWLLCFSNIFLYVVRIGIDQ) form a helical membrane-spanning segment. The Periplasmic segment spans residues 281–297 (WSTVYAFQELKLSKEVA). A helical membrane pass occupies residues 298-318 (IQGFTLFEVGALVGTLLWGWL). Over 319 to 326 (SDLANGRR) the chain is Cytoplasmic. Residues 327–347 (ALVACVALALIIATLGVYQHA) traverse the membrane as a helical segment. At 348-357 (SNQYVYLASL) the chain is on the periplasmic side. The chain crosses the membrane as a helical span at residues 358–378 (FALGFLVFGPQLLIGVAAVGF). Topologically, residues 379 to 382 (VPKK) are cytoplasmic. Residues 383–403 (AIGAADGIKGTFAYLIGDSFA) form a helical membrane-spanning segment. At 404–425 (KLGLGMIADGTPVFGLTGWAGT) the chain is on the periplasmic side. The helical transmembrane segment at 426–446 (FAALDAAAIGCICLMAMVAVM) threads the bilayer. Over 447–463 (EERKIRREKKIQQVNIA) the chain is Cytoplasmic.

It belongs to the major facilitator superfamily. Organophosphate:Pi antiporter (OPA) (TC 2.A.1.4) family.

It is found in the cell inner membrane. Mediates the exchange of external hexose 6-phosphate and internal inorganic phosphate. The protein is Hexose-6-phosphate:phosphate antiporter (uhpT) of Salmonella typhimurium (strain LT2 / SGSC1412 / ATCC 700720).